Consider the following 255-residue polypeptide: Triosephosphate isomerase (255 aa).

Asparagine 9–lysine 11 is a substrate binding site. Histidine 95 serves as the catalytic Electrophile. Glutamate 167 serves as the catalytic Proton acceptor. Substrate is bound by residues glycine 173, serine 212, and glycine 233 to glycine 234.

The protein belongs to the triosephosphate isomerase family. As to quaternary structure, homodimer.

It localises to the cytoplasm. It catalyses the reaction D-glyceraldehyde 3-phosphate = dihydroxyacetone phosphate. Its pathway is carbohydrate biosynthesis; gluconeogenesis. The protein operates within carbohydrate degradation; glycolysis; D-glyceraldehyde 3-phosphate from glycerone phosphate: step 1/1. Its function is as follows. Involved in the gluconeogenesis. Catalyzes stereospecifically the conversion of dihydroxyacetone phosphate (DHAP) to D-glyceraldehyde-3-phosphate (G3P). The protein is Triosephosphate isomerase of Photorhabdus laumondii subsp. laumondii (strain DSM 15139 / CIP 105565 / TT01) (Photorhabdus luminescens subsp. laumondii).